A 202-amino-acid chain; its full sequence is UPF0102 protein Dde_1093 (202 aa).

It belongs to the UPF0102 family.

The protein is UPF0102 protein Dde_1093 of Oleidesulfovibrio alaskensis (strain ATCC BAA-1058 / DSM 17464 / G20) (Desulfovibrio alaskensis).